The primary structure comprises 477 residues: UDP-N-acetylmuramate--L-alanine ligase (477 aa).

115–121 (GTHGKTT) serves as a coordination point for ATP.

This sequence belongs to the MurCDEF family.

The protein localises to the cytoplasm. The enzyme catalyses UDP-N-acetyl-alpha-D-muramate + L-alanine + ATP = UDP-N-acetyl-alpha-D-muramoyl-L-alanine + ADP + phosphate + H(+). The protein operates within cell wall biogenesis; peptidoglycan biosynthesis. Its function is as follows. Cell wall formation. This is UDP-N-acetylmuramate--L-alanine ligase from Gluconobacter oxydans (strain 621H) (Gluconobacter suboxydans).